The primary structure comprises 1254 residues: Structural polyprotein (1254 aa).

The segment at 43–77 (LQAQQMQQLISAVSALTTKQNVKAPKGQRQKKQQK) is host transcription inhibition. Positions 60–113 (TKQNVKAPKGQRQKKQQKPKEKKENQKKKPTQKKKQQQKPKPQAKKKKPGRRER) are disordered. The Nuclear localization signal motif lies at 70–108 (QRQKKQQKPKEKKENQKKKPTQKKKQQQKPKPQAKKKKP). Positions 84 to 110 (NQKKKPTQKKKQQQKPKPQAKKKKPGR) are enriched in basic residues. The binding to the viral RNA stretch occupies residues 95–123 (QQQKPKPQAKKKKPGRRERMCMKIENDCI). The ribosome-binding stretch occupies residues 108 to 122 (PGRRERMCMKIENDC). The cysteines at positions 122 and 137 are disulfide-linked. The region spanning 122 to 270 (CIFEVKLDGK…RVTPEGTEEW (149 aa)) is the Peptidase S3 domain. His-148 acts as the Charge relay system in catalysis. A Nuclear export signal motif is present at residues 153–163 (IDNPDLAKLTY). The interval 164–169 (KKSSKY) is interaction with spike glycoprotein E2. Asp-170 acts as the Charge relay system in catalysis. The tract at residues 192-202 (PEGHYNWHHGA) is dimerization of the capsid protein. Catalysis depends on Ser-222, which acts as the Charge relay system. The dimerization of the capsid protein stretch occupies residues 228-232 (DNKGR). The tract at residues 271-282 (SAALMMCILANT) is functions as an uncleaved signal peptide for the precursor of protein E3/E2. At 271–694 (SAALMMCILA…PHEIIQYYYG (424 aa)) the chain is on the extracellular side. Cystine bridges form between Cys-277–Cys-286, Cys-291–Cys-295, and Cys-294–Cys-326. An N-linked (GlcNAc...) asparagine; by host glycan is attached at Asn-281. Residue Asn-328 is glycosylated (N-linked (GlcNAc...) asparagine; by host). Disulfide bonds link Cys-353–Cys-459, Cys-356–Cys-362, Cys-425–Cys-439, Cys-487–Cys-599, Cys-535–Cys-559, and Cys-537–Cys-554. Interaction with host Mxra8 receptor regions lie at residues 360–363 (YFCY) and 396–398 (HAH). An interaction with host Mxra8 receptor region spans residues 518-521 (TAGN). The N-linked (GlcNAc...) asparagine; by host glycan is linked to Asn-534. Residues 550–556 (TINTCKI) are interaction with host Mxra8 receptor. N-linked (GlcNAc...) asparagine; by host glycosylation occurs at Asn-596. A helical membrane pass occupies residues 695–715 (LYPAATIAAVSGASLMALLTL). Topologically, residues 716–756 (AATCCMLATARRKCLTPYALTPGAVVPLTLGLLCCAPRANA) are cytoplasmic. Cys-719 carries S-palmitoyl cysteine; by host lipidation. Residues 724 to 728 (TARRK) form an interaction with the capsid protein region. S-palmitoyl cysteine; by host attachment occurs at residues Cys-729, Cys-749, and Cys-750. A transient transmembrane before p62-6K protein processing region spans residues 729-749 (CLTPYALTPGAVVPLTLGLLC). Residues Cys-729 and Cys-750 are joined by a disulfide bond. Topologically, residues 757–771 (ASFAETMAYLWDENK) are extracellular. Residues 772-792 (TLFWMEFAAPAAALALLACCI) traverse the membrane as a helical segment. Lys-793 is a topological domain (cytoplasmic). The helical transmembrane segment at 794 to 814 (SLICCCKPFSFLVLLSLGASA) threads the bilayer. Residues 815-1231 (KAYEHTATIP…AMTWVQRLAS (417 aa)) are Extracellular-facing. 4 disulfides stabilise this stretch: Cys-865-Cys-930, Cys-878-Cys-910, Cys-879-Cys-912, and Cys-884-Cys-894. An E1 fusion peptide loop region spans residues 900–917 (VYPFMWGGAYCFCDSENT). Asn-957 carries N-linked (GlcNAc...) asparagine; by host glycosylation. Cystine bridges form between Cys-1075–Cys-1087, Cys-1117–Cys-1192, Cys-1122–Cys-1196, and Cys-1144–Cys-1186. A helical membrane pass occupies residues 1232–1252 (GLGGLALIAVVVLVLVTCITM). Residue Cys-1249 is the site of S-palmitoyl cysteine; by host attachment. Cys-1249 carries S-stearoyl cysteine; by host lipidation. Topologically, residues 1253–1254 (RR) are cytoplasmic.

As to quaternary structure, homodimer. Homomultimer. Interacts with host karyopherin KPNA4; this interaction allows the nuclear import of the viral capsid protein. Interacts with spike glycoprotein E2. Interacts with host IRAK1; the interaction leads to inhibition of IRAK1-dependent signaling. The precursor of protein E3/E2 and E1 form a heterodimer shortly after synthesis. In terms of assembly, interacts with spike glycoprotein E2. The precursor of protein E3/E2 and E1 form a heterodimer shortly after synthesis. Processing of the precursor of protein E3/E2 into E2 and E3 results in a heterodimer of the spike glycoproteins E2 and E1. Spike at virion surface are constituted of a trimer of E2-E1 heterodimers. After target cell attachment and endocytosis, E1 change conformation to form homotrimers. Interacts with 6K protein. E1/E2 heterodimer interacts with host LDLR. As to quaternary structure, interacts with spike glycoprotein E1. Processing of the precursor of protein E3/E2 into E2 and E3 results in a heterodimer of the spike glycoproteins E2 and E1. Spike at virion surface are constituted of a trimer of E2-E1 heterodimers. Interacts with 6K protein. Interacts with host MXRA8; this interaction mediates virus entry. Oligomer. Interacts with spike glycoprotein E1. Interacts with spike glycoprotein E2. Structural polyprotein: Specific enzymatic cleavages in vivo yield mature proteins. Capsid protein is auto-cleaved during polyprotein translation, unmasking a signal peptide at the N-terminus of the precursor of E3/E2. The remaining polyprotein is then targeted to the host endoplasmic reticulum, where host signal peptidase cleaves it into pE2, 6K and E1 proteins. pE2 is further processed to mature E3 and E2 by host furin in trans-Golgi vesicle. Post-translationally, palmitoylated via thioester bonds. These palmitoylations may induce disruption of the C-terminus transmembrane. This would result in the reorientation of E2 C-terminus from lumenal to cytoplasmic side. In terms of processing, N-glycosylated. Palmitoylated via thioester bonds.

It localises to the virion. Its subcellular location is the host cytoplasm. The protein resides in the host cell membrane. The protein localises to the host nucleus. It is found in the virion membrane. It localises to the host Golgi apparatus. Its subcellular location is the host trans-Golgi network. The protein resides in the host endoplasmic reticulum. The enzyme catalyses Autocatalytic release of the core protein from the N-terminus of the togavirus structural polyprotein by hydrolysis of a -Trp-|-Ser- bond.. Its function is as follows. Forms an icosahedral capsid with a T=4 symmetry composed of 240 copies of the capsid protein surrounded by a lipid membrane through which penetrate 80 spikes composed of trimers of E1-E2 heterodimers. The capsid protein binds to the viral RNA genome at a site adjacent to a ribosome binding site for viral genome translation following genome release. Possesses a protease activity that results in its autocatalytic cleavage from the nascent structural protein. Following its self-cleavage, the capsid protein transiently associates with ribosomes, and within several minutes the protein binds to viral RNA and rapidly assembles into icosahedric core particles. The resulting nucleocapsid eventually associates with the cytoplasmic domain of the spike glycoprotein E2 at the cell membrane, leading to budding and formation of mature virions. In case of infection, new virions attach to target cells and after clathrin-mediated endocytosis their membrane fuses with the host endosomal membrane. This leads to the release of the nucleocapsid into the cytoplasm, followed by an uncoating event necessary for the genomic RNA to become accessible. The uncoating might be triggered by the interaction of capsid proteins with ribosomes. Binding of ribosomes would release the genomic RNA since the same region is genomic RNA-binding and ribosome-binding. Specifically inhibits interleukin-1 receptor-associated kinase 1/IRAK1-dependent signaling during viral entry, representing a means by which the alphaviruses may evade innate immune detection and activation prior to viral gene expression. Functionally, provides the signal sequence for the translocation of the precursor of protein E3/E2 to the host endoplasmic reticulum. Furin-cleaved E3 remains associated with spike glycoprotein E1 and mediates pH protection of the latter during the transport via the secretory pathway. After virion release from the host cell, the assembly protein E3 is gradually released in the extracellular space. In terms of biological role, plays a role in viral attachment to target host cell, by binding to the cell receptor MXRA8. The host LDLR may also act as a cell receptor for viral entry. Synthesized as a p62 precursor which is processed by furin at the cell membrane just before virion budding, giving rise to E2-E1 heterodimer. The p62-E1 heterodimer is stable, whereas E2-E1 is unstable and dissociate at low pH. p62 is processed at the last step, presumably to avoid E1 fusion activation before its final export to cell surface. E2 C-terminus contains a transitory transmembrane that would be disrupted by palmitoylation, resulting in reorientation of the C-terminal tail from lumenal to cytoplasmic side. This step is critical since E2 C-terminus is involved in budding by interacting with capsid proteins. This release of E2 C-terminus in cytoplasm occurs lately in protein export, and precludes premature assembly of particles at the endoplasmic reticulum membrane. Acts as a viroporin that participates in virus glycoprotein processing and transport to the plasma membrane, cell permeabilization and budding of viral particles. The cation channel is permeable to Na(+)&gt;K(+)&gt;Ca(2+) in vitro. Disrupts the calcium homeostasis of the cell, probably at the endoplasmic reticulum level. This leads to cytoplasmic calcium elevation. Because of its lipophilic properties, the 6K protein is postulated to influence the selection of lipids that interact with the transmembrane domains of the glycoproteins, which, in turn, affects the deformability of the bilayer required for the extreme curvature that occurs as budding proceeds. Present in low amount in virions, about 3% compared to viral glycoproteins. Its function is as follows. Class II viral fusion protein. Fusion activity is inactive as long as E1 is bound to E2 in mature virion. After virus attachment to target cell via host MXRA8 and endocytosis, acidification of the endosome induce dissociation of E1/E2 heterodimer and concomitant trimerization of the E1 subunits. This E1 trimer is fusion active, and promotes release of viral nucleocapsid in cytoplasm after endosome and viral membrane fusion. Efficient fusion requires the presence of cholesterol and sphingolipid in the target membrane. The protein is Structural polyprotein of Aedes (Common banded mosquito).